The primary structure comprises 515 residues: Ecdysteroid UDP-glucosyltransferase (515 aa).

The first 31 residues, 1-31 (MKMIILVVSLHVLRNSAAVRVLCMFPTPSYS), serve as a signal peptide directing secretion.

This sequence belongs to the UDP-glycosyltransferase family.

Its function is as follows. Catalyzes the transfer of glucose from UDP-glucose to ecdysteroids which are insect molting hormones. Expression of egt interferes with normal insect development and block molting. The protein is Ecdysteroid UDP-glucosyltransferase (EGT) of Spodoptera littoralis nuclear polyhedrosis virus (SlNPV).